The primary structure comprises 361 residues: Molybdenum import ATP-binding protein ModC (361 aa).

One can recognise an ABC transporter domain in the interval 1-228 (MLNINIEKQF…EQMRPWVPLQ (228 aa)). 31–38 (GRSGAGKT) serves as a coordination point for ATP. One can recognise a Mop domain in the interval 289–356 (GSSIRNLLRG…IKGVTMTQMD (68 aa)).

Belongs to the ABC transporter superfamily. Molybdate importer (TC 3.A.1.8) family. In terms of assembly, the complex is composed of two ATP-binding proteins (ModC), two transmembrane proteins (ModB) and a solute-binding protein (ModA).

The protein localises to the cell inner membrane. The enzyme catalyses molybdate(out) + ATP + H2O = molybdate(in) + ADP + phosphate + H(+). Functionally, part of the ABC transporter complex ModABC involved in molybdenum import. Responsible for energy coupling to the transport system. The chain is Molybdenum import ATP-binding protein ModC from Shewanella sp. (strain MR-4).